The chain runs to 157 residues: Endoribonuclease YbeY (157 aa).

3 residues coordinate Zn(2+): histidine 116, histidine 120, and histidine 126.

Belongs to the endoribonuclease YbeY family. Zn(2+) serves as cofactor.

Its subcellular location is the cytoplasm. Single strand-specific metallo-endoribonuclease involved in late-stage 70S ribosome quality control and in maturation of the 3' terminus of the 16S rRNA. This chain is Endoribonuclease YbeY, found in Arthrobacter sp. (strain FB24).